The chain runs to 366 residues: Holliday junction branch migration complex subunit RuvB (366 aa).

Residues 1-49 (MAIISSKKQPPEPNGQPNKRPESAPSVPKEKVLQPEAAIDEQGKQEESI) form a disordered region. Residues 13-210 (PNGQPNKRPE…FGLIQKLRFY (198 aa)) form a large ATPase domain (RuvB-L) region. ATP-binding positions include isoleucine 49, arginine 50, glycine 91, lysine 94, threonine 95, threonine 96, 157–159 (EDY), arginine 200, tyrosine 210, and arginine 247. Threonine 95 contributes to the Mg(2+) binding site. A small ATPAse domain (RuvB-S) region spans residues 211–281 (EVDELSQIVL…IAAEALQLFQ (71 aa)). The tract at residues 284–366 (PCGLDWTDRR…TPPNEQLSLL (83 aa)) is head domain (RuvB-H). DNA-binding residues include arginine 339 and arginine 344.

It belongs to the RuvB family. In terms of assembly, homohexamer. Forms an RuvA(8)-RuvB(12)-Holliday junction (HJ) complex. HJ DNA is sandwiched between 2 RuvA tetramers; dsDNA enters through RuvA and exits via RuvB. An RuvB hexamer assembles on each DNA strand where it exits the tetramer. Each RuvB hexamer is contacted by two RuvA subunits (via domain III) on 2 adjacent RuvB subunits; this complex drives branch migration. In the full resolvosome a probable DNA-RuvA(4)-RuvB(12)-RuvC(2) complex forms which resolves the HJ.

Its subcellular location is the cytoplasm. The enzyme catalyses ATP + H2O = ADP + phosphate + H(+). The RuvA-RuvB-RuvC complex processes Holliday junction (HJ) DNA during genetic recombination and DNA repair, while the RuvA-RuvB complex plays an important role in the rescue of blocked DNA replication forks via replication fork reversal (RFR). RuvA specifically binds to HJ cruciform DNA, conferring on it an open structure. The RuvB hexamer acts as an ATP-dependent pump, pulling dsDNA into and through the RuvAB complex. RuvB forms 2 homohexamers on either side of HJ DNA bound by 1 or 2 RuvA tetramers; 4 subunits per hexamer contact DNA at a time. Coordinated motions by a converter formed by DNA-disengaged RuvB subunits stimulates ATP hydrolysis and nucleotide exchange. Immobilization of the converter enables RuvB to convert the ATP-contained energy into a lever motion, pulling 2 nucleotides of DNA out of the RuvA tetramer per ATP hydrolyzed, thus driving DNA branch migration. The RuvB motors rotate together with the DNA substrate, which together with the progressing nucleotide cycle form the mechanistic basis for DNA recombination by continuous HJ branch migration. Branch migration allows RuvC to scan DNA until it finds its consensus sequence, where it cleaves and resolves cruciform DNA. The chain is Holliday junction branch migration complex subunit RuvB from Nostoc sp. (strain PCC 7120 / SAG 25.82 / UTEX 2576).